The sequence spans 156 residues: ATP synthase subunit b (156 aa).

Residues 13 to 33 form a helical membrane-spanning segment; that stretch reads AFIIFVWFCMKFVWPPLMNAI.

The protein belongs to the ATPase B chain family. As to quaternary structure, F-type ATPases have 2 components, F(1) - the catalytic core - and F(0) - the membrane proton channel. F(1) has five subunits: alpha(3), beta(3), gamma(1), delta(1), epsilon(1). F(0) has three main subunits: a(1), b(2) and c(10-14). The alpha and beta chains form an alternating ring which encloses part of the gamma chain. F(1) is attached to F(0) by a central stalk formed by the gamma and epsilon chains, while a peripheral stalk is formed by the delta and b chains.

It localises to the cell inner membrane. In terms of biological role, f(1)F(0) ATP synthase produces ATP from ADP in the presence of a proton or sodium gradient. F-type ATPases consist of two structural domains, F(1) containing the extramembraneous catalytic core and F(0) containing the membrane proton channel, linked together by a central stalk and a peripheral stalk. During catalysis, ATP synthesis in the catalytic domain of F(1) is coupled via a rotary mechanism of the central stalk subunits to proton translocation. Functionally, component of the F(0) channel, it forms part of the peripheral stalk, linking F(1) to F(0). The protein is ATP synthase subunit b of Shewanella woodyi (strain ATCC 51908 / MS32).